Here is a 195-residue protein sequence, read N- to C-terminus: uncharacterized protein (195 aa).

The N-terminal stretch at 1 to 21 is a signal peptide; that stretch reads MHFSSCVLVSALAIVTNVATA. N-linked (GlcNAc...) asparagine glycosylation is found at Asn62 and Asn109. The disordered stretch occupies residues 119–141; the sequence is DWDEDTVTGENAPDSGEPFSTSH.

Its subcellular location is the secreted. This is an uncharacterized protein from Arthroderma benhamiae (strain ATCC MYA-4681 / CBS 112371) (Trichophyton mentagrophytes).